A 374-amino-acid polypeptide reads, in one-letter code: Protein Brevis radix-like 2 (374 aa).

2 disordered regions span residues 12–43 (NTNNGGSKKQEEDEEEEDRVIETPRSKQIKSL) and 57–80 (AYKSCKPCSGSSNQNKNRSYADSD). Positions 65–80 (SGSSNQNKNRSYADSD) are enriched in polar residues. One can recognise a BRX 1 domain in the interval 143–198 (KEWVAQVEPGVLITFVSLPEGGNDMKRIRFSREMFDKWQAQKWWAENFDKVMELYN). The tract at residues 205–316 (QSVPLPTPPR…EELSVSNASD (112 aa)) is disordered. 2 stretches are compositionally biased toward polar residues: residues 246-259 (SSGSLAHQPTTQTQ) and 267-288 (GLATTPKLSSISGTKTETSSVD). Basic and acidic residues predominate over residues 289 to 307 (ESARSSFSREEEEADHSGE). The region spanning 319-374 (TEWVEQDEAGVYITIRALPDGTRELRRVRFSREKFGETNARLWWEQNRARIQQQYL) is the BRX 2 domain.

Belongs to the BRX family. In terms of tissue distribution, expressed in roots.

It localises to the nucleus. The chain is Protein Brevis radix-like 2 (BRXL2) from Arabidopsis thaliana (Mouse-ear cress).